Consider the following 300-residue polypeptide: Free fatty acid receptor 1 (300 aa).

The Extracellular portion of the chain corresponds to 1-8; it reads MDLPPQLS. The helical transmembrane segment at 9–31 threads the bilayer; it reads FALYVSAFALGFPLNLLAIRGAV. The Cytoplasmic portion of the chain corresponds to 32–41; sequence SHAKLRLTPS. Residues 42–64 form a helical membrane-spanning segment; the sequence is LVYTLHLGCSDLLLAITLPLKAV. Residues 65-79 are Extracellular-facing; the sequence is EALASGAWPLPLPFC. Cys-79 and Cys-170 are disulfide-bonded. The chain crosses the membrane as a helical span at residues 80-101; sequence PVFALAHFAPLYAGGGFLAALS. The Cytoplasmic portion of the chain corresponds to 102 to 121; it reads AGRYLGAAFPFGYQAIRRPR. Residues 122 to 142 form a helical membrane-spanning segment; that stretch reads YSWGVCVAIWALVLCHLGLAL. Topologically, residues 143–178 are extracellular; it reads GLETSGSWLDNSTSSLGINIPVNGSPVCLEAWDPDS. The N-linked (GlcNAc...) asparagine glycan is linked to Asn-153. A helical membrane pass occupies residues 179–200; it reads ARPARLSFSILLFFLPLVITAF. At 201–223 the chain is on the cytoplasmic side; that stretch reads CYVGCLRALVRSGLSHKRKLRAA. The chain crosses the membrane as a helical span at residues 224 to 248; the sequence is WVAGGALLTLLLCLGPYNASNVASF. At 249–256 the chain is on the extracellular side; it reads INPDLGGS. Residues 257–279 form a helical membrane-spanning segment; the sequence is WRKLGLITGAWSVVLNPLVTGYL. Over 280–300 the chain is Cytoplasmic; sequence GTGPGRGTICVTRTQRGTIQK.

The protein belongs to the G-protein coupled receptor 1 family. As to expression, expressed in pancreatic islet beta cells (at protein level). Expressed in pancreatic islet beta cells.

It is found in the cell membrane. Its activity is regulated as follows. Is also activated by synthetic agonists, such as AM-8182, AM-6331 and TAK-875 (fasiglifam). AM-8182 is a full agonist, while AM-6331 and TAK-875 (fasiglifam) are partial agonists that potentiate the activity of the endogenous ligands, such as alpha-linolenic acid and gamma-linolenic acid. Its function is as follows. G-protein coupled receptor for medium and long chain saturated and unsaturated fatty acids that plays an important role in glucose homeostasis. Fatty acid binding increases glucose-stimulated insulin secretion, and may also enhance the secretion of glucagon-like peptide 1 (GLP-1). May also play a role in bone homeostasis; receptor signaling activates pathways that inhibit osteoclast differentiation. Ligand binding leads to a conformation change that triggers signaling via G-proteins that activate phospholipase C, leading to an increase of the intracellular calcium concentration. Seems to act through a G(q) and G(i)-mediated pathway. Mediates the anti-inflammatory effects of omega-3 polyunsaturated fatty acids (PUFAs) via inhibition of NLRP3 inflammasome activation. The protein is Free fatty acid receptor 1 (Ffar1) of Mus musculus (Mouse).